A 314-amino-acid chain; its full sequence is MVENSSSNNSTRPIPAIPMDLPDYEALPTHAPLYHQLIAGAFAGIMEHSVMFPIDALKTRIQSANAKSLSAKNMLSQISHISTSEGTLALWKGVQSVILGAGPAHAVYFGTYEFCKKNLIDSSDTQTHHPFKTAISGACATTASDALMNPFDTIKQRIQLNTSASVWQTTKQIYQSEGLAAFYYSYPTTLVMNIPFAAFNFVIYESSTKFLNPSNEYNPLIHCLCGSISGSTCAAITTPLDCIKTVLQIRGSQTVSLEIMRKADTFSKAASAIYQVYGWKGFWRGWKPRIVANMPATAISWTAYECAKHFLMTY.

Solcar repeat units lie at residues 31–118 (APLY…CKKN), 128–210 (HHPF…STKF), and 217–310 (YNPL…AKHF). The next 6 membrane-spanning stretches (helical) occupy residues 33-52 (LYHQ…SVMF), 93-112 (GVQS…FGTY), 130-149 (PFKT…ALMN), 185-204 (SYPT…FVIY), 219-238 (PLIH…AITT), and 285-298 (GWKP…PATA).

Belongs to the mitochondrial carrier (TC 2.A.29) family.

It localises to the mitochondrion inner membrane. Functionally, MRS3 suppresses a mitochondrial splice defect in the first intron of the COB gene. It may act as a carrier, exerting its suppressor activity via modulation of solute concentrations in the mitochondrion (possibly of cations). The polypeptide is Mitochondrial RNA-splicing protein MRS3 (MRS3) (Saccharomyces cerevisiae (strain ATCC 204508 / S288c) (Baker's yeast)).